The primary structure comprises 354 residues: Zinc finger protein-like 1 homolog (354 aa).

A B box-type; degenerate zinc finger spans residues 1-41; that stretch reads MGICKCKKRSEDFCFNHKKFICDSCVVADHSICYIKSYVSW. The RING-type; atypical zinc finger occupies 52-103; it reads CGVCKGKFDVDDNDDSVRLLCYHLYHPECIDVYVAALPQNSSVESYPCPKCP. 2 disordered regions span residues 139–167 and 187–225; these read KQNS…NGTH and GIHH…PYGL. Positions 196–205 are enriched in low complexity; that stretch reads NNSNNNNIIN. A helical membrane pass occupies residues 287 to 307; it reads YLIMITVAIIVFLILISKMGS. The segment at 326 to 354 is disordered; that stretch reads ININNDNNGGNGAINEETLNDQKIPNNGQ.

The protein belongs to the ZFPL1 family.

Its subcellular location is the membrane. This is Zinc finger protein-like 1 homolog (zfpl1) from Dictyostelium discoideum (Social amoeba).